The chain runs to 324 residues: G patch domain-containing protein 4 (324 aa).

Disordered regions lie at residues 1-30 (MSAS…GKGL) and 123-324 (LSGG…NKSE). One can recognise a G-patch domain in the interval 11–57 (GMKFAEEQMHKHGWKEGKGLGRRENGICEAIKVKVKCDHAGVGHNSA). Over residues 14-30 (FAEEQMHKHGWKEGKGL) the composition is skewed to basic and acidic residues. The segment covering 131–141 (KEPSSSESSDS) has biased composition (low complexity). Over residues 186–215 (SRLEEQEREFLAKYGKKEQKNKERDEKLER) the composition is skewed to basic and acidic residues. Positions 244–253 (HKKKKKKRKR) are enriched in basic residues. Positions 254–270 (ADSERKEESQENGHEEE) are enriched in basic and acidic residues. Residues 296–309 (PSTQEEQPTESSDF) show a composition bias toward polar residues. Over residues 312–324 (KPKKKKKKKNKSE) the composition is skewed to basic residues.

This chain is G patch domain-containing protein 4 (gpatch4), found in Xenopus laevis (African clawed frog).